The chain runs to 304 residues: HTH-type transcriptional regulator BenM (304 aa).

The 58-residue stretch at 1 to 58 (MELRHLRYFVAVVEEQSFTKAADKLCIAQPPLSRQIQNLEEELGIQLLERGSRPVKTT) folds into the HTH lysR-type domain. Positions 18 to 37 (FTKAADKLCIAQPPLSRQIQ) form a DNA-binding region, H-T-H motif. 2 residues coordinate benzoate: Ser-99 and Leu-104. A cis,cis-muconate-binding site is contributed by Ser-99. Thr-128 contacts cis,cis-muconate. Benzoate contacts are provided by Phe-144, Arg-160, and Asn-202. Phe-203 is a cis,cis-muconate binding site. Tyr-293 is a benzoate binding site.

This sequence belongs to the LysR transcriptional regulatory family. In terms of assembly, homotetramer; dimer of dimers. The dimers can also associate to form linear, higher oligomers (in vitro).

Positive regulator of the ben and cat genes for benzoate degradation. BenM is necessary for ben gene expression but not for expression of the cat genes, which can be regulated by CatM. Binds to the inducers cis,cis-muconate and benzoate. The chain is HTH-type transcriptional regulator BenM (benM) from Acinetobacter baylyi (strain ATCC 33305 / BD413 / ADP1).